The sequence spans 777 residues: Ribosome-releasing factor 2, mitochondrial (777 aa).

The tr-type G domain maps to 68–353 (AKIRNIGIMA…AITMYLPSPE (286 aa)). Residues 77 to 84 (AHIDAGKT), 141 to 145 (DTPGH), and 195 to 198 (NKMD) contribute to the GTP site.

This sequence belongs to the TRAFAC class translation factor GTPase superfamily. Classic translation factor GTPase family. EF-G/EF-2 subfamily.

It localises to the mitochondrion. The catalysed reaction is GTP + H2O = GDP + phosphate + H(+). Mitochondrial GTPase that mediates the disassembly of ribosomes from messenger RNA at the termination of mitochondrial protein biosynthesis. Acts in collaboration with MRRF. GTP hydrolysis follows the ribosome disassembly and probably occurs on the ribosome large subunit. Not involved in the GTP-dependent ribosomal translocation step during translation elongation. In Bos taurus (Bovine), this protein is Ribosome-releasing factor 2, mitochondrial.